Consider the following 77-residue polypeptide: MATGTPAHELRELNNEELTTRLREAKEELFNLRFQAATGQLTNNRRLGVVKRDIARIYTVLRERELGLSTNPGGDAA.

It belongs to the universal ribosomal protein uL29 family.

This Corynebacterium jeikeium (strain K411) protein is Large ribosomal subunit protein uL29.